The chain runs to 246 residues: Bis(5'-nucleosyl)-tetraphosphatase PrpE [asymmetrical] (246 aa).

The protein belongs to the PrpE family. Ni(2+) is required as a cofactor.

The enzyme catalyses P(1),P(4)-bis(5'-guanosyl) tetraphosphate + H2O = GMP + GTP + 2 H(+). In terms of biological role, asymmetrically hydrolyzes Ap4p to yield AMP and ATP. The chain is Bis(5'-nucleosyl)-tetraphosphatase PrpE [asymmetrical] from Halalkalibacterium halodurans (strain ATCC BAA-125 / DSM 18197 / FERM 7344 / JCM 9153 / C-125) (Bacillus halodurans).